Consider the following 159-residue polypeptide: NADH-quinone oxidoreductase subunit B (159 aa).

The [4Fe-4S] cluster site is built by C36, C37, C102, and C132.

Belongs to the complex I 20 kDa subunit family. In terms of assembly, NDH-1 is composed of 14 different subunits. Subunits NuoB, C, D, E, F, and G constitute the peripheral sector of the complex. [4Fe-4S] cluster serves as cofactor.

It is found in the cell inner membrane. The catalysed reaction is a quinone + NADH + 5 H(+)(in) = a quinol + NAD(+) + 4 H(+)(out). In terms of biological role, NDH-1 shuttles electrons from NADH, via FMN and iron-sulfur (Fe-S) centers, to quinones in the respiratory chain. Couples the redox reaction to proton translocation (for every two electrons transferred, four hydrogen ions are translocated across the cytoplasmic membrane), and thus conserves the redox energy in a proton gradient. This is NADH-quinone oxidoreductase subunit B from Verminephrobacter eiseniae (strain EF01-2).